We begin with the raw amino-acid sequence, 1680 residues long: RAF-like serine/threonine-protein kinase PRAF (1680 aa).

Positions 86-163 (FSPSDPHNSV…TPSDDGKDFP (78 aa)) are disordered. Positions 166–267 (RVKFMCSFGG…SRLRVFLFPA (102 aa)) constitute a PB1 domain. Disordered stretches follow at residues 363-388 (LTGN…PLLA), 417-516 (PQYT…DSQQ), 556-580 (PDML…QPQQ), 594-613 (GANH…SQQF), 641-672 (QSTS…PQLQ), 700-725 (RSFR…LHRQ), and 1186-1226 (LPNA…LGGQ). The span at 366–388 (NLSNRSNAPSAPSSAPSSPPLLA) shows a compositional bias: low complexity. Basic and acidic residues predominate over residues 446–482 (HEMHYRSTDSRRGPESPPKKFHDALHQDHPITVEQRR). Composition is skewed to low complexity over residues 560 to 580 (QSSG…QPQQ) and 603 to 613 (QGDQQQQSQQF). A compositionally biased stretch (polar residues) spans 641 to 651 (QSTSYHGSAPS). Residues 1204–1217 (SRSSSSSLSELSKS) are compositionally biased toward low complexity. Serine 1248 is subject to Phosphoserine. Positions 1339–1354 (ASTVDKENQEEVRTGL) are enriched in basic and acidic residues. The disordered stretch occupies residues 1339–1372 (ASTVDKENQEEVRTGLDEPADEDKANSTGLGSDP). At serine 1365 the chain carries Phosphoserine. A Protein kinase domain is found at 1389–1655 (LEELRELGSG…SDIAKELRTM (267 aa)). Residues 1395–1403 (LGSGTFGTV) and lysine 1416 each bind ATP. Aspartate 1518 functions as the Proton acceptor in the catalytic mechanism. The segment at 1661–1680 (PKTQAQTQGQSHPHPQMQIV) is disordered.

Belongs to the protein kinase superfamily. Ser/Thr protein kinase family. Hyperphosphorylated in response to auxin. Its phosphorylation state is also rapidly stimulated by photosynthetic activity (e.g. in response to blue light and red light irradiation); dephosphorylated in the darkness.

The protein localises to the cytoplasm. It catalyses the reaction L-seryl-[protein] + ATP = O-phospho-L-seryl-[protein] + ADP + H(+). The enzyme catalyses L-threonyl-[protein] + ATP = O-phospho-L-threonyl-[protein] + ADP + H(+). With respect to regulation, activated by auxin via rapid phosphorylation. Regulated by photosynthesis-activity-dependent changes in its phosphorylation status. RAF-like protein kinase acting as a central mediator of a fast response pathway to auxin involving proteins phosphorylation, and leading to rapid cellular responses including membrane depolarization and cytoplasmic streaming. Required for general growth and developmental process. Photosynthesis signaling kinase involved in the regulation of the sucrose metabolism involving PGM1. Necessary for optimal chloroplast electron transport rate (ETR). In Marchantia polymorpha (Common liverwort), this protein is RAF-like serine/threonine-protein kinase PRAF.